A 273-amino-acid chain; its full sequence is Hydroxyethylthiazole kinase (273 aa).

Met41 contacts substrate. ATP-binding residues include Arg117 and Thr170. Gly197 lines the substrate pocket.

This sequence belongs to the Thz kinase family. Mg(2+) serves as cofactor.

It carries out the reaction 5-(2-hydroxyethyl)-4-methylthiazole + ATP = 4-methyl-5-(2-phosphooxyethyl)-thiazole + ADP + H(+). It functions in the pathway cofactor biosynthesis; thiamine diphosphate biosynthesis; 4-methyl-5-(2-phosphoethyl)-thiazole from 5-(2-hydroxyethyl)-4-methylthiazole: step 1/1. Catalyzes the phosphorylation of the hydroxyl group of 4-methyl-5-beta-hydroxyethylthiazole (THZ). This is Hydroxyethylthiazole kinase from Clostridium acetobutylicum (strain ATCC 824 / DSM 792 / JCM 1419 / IAM 19013 / LMG 5710 / NBRC 13948 / NRRL B-527 / VKM B-1787 / 2291 / W).